Reading from the N-terminus, the 66-residue chain is Translational regulator CsrA (66 aa).

This sequence belongs to the CsrA/RsmA family. Homodimer; the beta-strands of each monomer intercalate to form a hydrophobic core, while the alpha-helices form wings that extend away from the core.

The protein resides in the cytoplasm. In terms of biological role, a key translational regulator that binds mRNA to regulate translation initiation and/or mRNA stability. Mediates global changes in gene expression, shifting from rapid growth to stress survival by linking envelope stress, the stringent response and the catabolite repression systems. Usually binds in the 5'-UTR; binding at or near the Shine-Dalgarno sequence prevents ribosome-binding, repressing translation, binding elsewhere in the 5'-UTR can activate translation and/or stabilize the mRNA. Its function is antagonized by small RNA(s). The protein is Translational regulator CsrA of Alkalilimnicola ehrlichii (strain ATCC BAA-1101 / DSM 17681 / MLHE-1).